Here is a 502-residue protein sequence, read N- to C-terminus: Keratin-associated protein 16-1 (502 aa).

15 consecutive repeat copies span residues 4 to 8 (CCCSR), 58 to 62 (CCQPS), 73 to 77 (CCEAT), 93 to 97 (CCEAT), 108 to 112 (CCQPV), 113 to 117 (CCEAT), 133 to 137 (CCEAT), 152 to 156 (CCETS), 177 to 181 (CCQPV), 187 to 191 (CCSAV), 212 to 216 (CCQPV), 222 to 226 (CCPSV), 272 to 276 (CCVQG), 292 to 296 (CCVSS), and 347 to 351 (CCRPG). A 15 X 5 AA repeats of C-C-X(3) region spans residues 73-307 (CCEATICEPS…CQPVCPEPSP (235 aa)). The disordered stretch occupies residues 435–502 (RQPCTDSDND…QPAASKPADR (68 aa)). Positions 489–502 (AAAPQPAASKPADR) are enriched in low complexity.

Belongs to the KRTAP type 16 family. Interacts with hair keratins.

In the hair cortex, hair keratin intermediate filaments are embedded in an interfilamentous matrix, consisting of hair keratin-associated proteins (KRTAP), which are essential for the formation of a rigid and resistant hair shaft through their extensive disulfide bond cross-linking with abundant cysteine residues of hair keratins. The matrix proteins include the high-sulfur and high-glycine-tyrosine keratins. The polypeptide is Keratin-associated protein 16-1 (Krtap16-1) (Mus musculus (Mouse)).